The primary structure comprises 517 residues: RNA-binding region-containing protein 3 (517 aa).

Residues 1–26 (MAAPEQPLAISRGCTSSSSLSPPRGD) form a disordered region. A necessary for interaction with PDCD7 region spans residues 1-257 (MAAPEQPLAI…STDDEDRQRM (257 aa)). Serine 21 is modified (phosphoserine). Residues 27 to 102 (RTLLVRHLPA…HTLVVEFAKE (76 aa)) enclose the RRM 1 domain. Disordered stretches follow at residues 106–130 (VHSP…DDKE) and 213–254 (MPLH…DEDR). Position 108 is a phosphoserine (serine 108). The segment covering 115-130 (SEKKKRSDDPVEDDKE) has biased composition (basic and acidic residues). Residues 211–380 (DYMPLHAPLP…LDITEEIKED (170 aa)) are necessary for binding to m(7)G-capped U12 snRNA. Over residues 217–230 (APLPPTSPQPPEEP) the composition is skewed to pro residues. The segment covering 231-252 (PLPDEDEELSSEESEYESTDDE) has biased composition (acidic residues). The RRM 2 domain occupies 420-503 (CRIYVKNLAK…KPMVVQFARS (84 aa)).

Component of the U11/U12 snRNPs that are part of the U12-type spliceosome. Found in a complex with m(7)G-capped U12 snRNA. Interacts with PDCD7. In terms of tissue distribution, highly expressed in pancreas and kidney. Detected at lower levels in heart, brain, placenta, lung, liver, spleen, thymus, prostate, testis, ovary, small intestine, colon and leukocytes.

It localises to the nucleus. Functionally, participates in pre-mRNA U12-dependent splicing, performed by the minor spliceosome which removes U12-type introns. U12-type introns comprises less than 1% of all non-coding sequences. Binds to the 3'-stem-loop of m(7)G-capped U12 snRNA. This is RNA-binding region-containing protein 3 (RNPC3) from Homo sapiens (Human).